A 144-amino-acid chain; its full sequence is Large ribosomal subunit protein uL15 (144 aa).

The segment at 1–52 (MRLNTLSPAEGAKHSAKRLGRGIGSGLGKTGGRGHKGQKSRTGSGVRRGFEG) is disordered. Residues 21-31 (RGIGSGLGKTG) are compositionally biased toward gly residues.

This sequence belongs to the universal ribosomal protein uL15 family. Part of the 50S ribosomal subunit.

Functionally, binds to the 23S rRNA. This Haemophilus influenzae (strain 86-028NP) protein is Large ribosomal subunit protein uL15.